Here is a 355-residue protein sequence, read N- to C-terminus: Guanine nucleotide-binding protein alpha-2 subunit (355 aa).

A disordered region spans residues 1 to 20 (MCFGGRGKDDEAEASRSREL). One can recognise a G-alpha domain in the interval 33–355 (KEVKLLLLGA…IQRNLKQLIL (323 aa)). The segment at 36–49 (KLLLLGAGESGKST) is G1 motif. Residues Glu44, Ser45, Gly46, Lys47, Ser48, Thr49, Asp151, Leu176, Thr182, Gly204, Asn270, Lys271, Asp273, and Ala328 each coordinate GTP. Ser48 contributes to the Mg(2+) binding site. Positions 174–182 (DLLRSRLRT) are G2 motif. Thr182 lines the Mg(2+) pocket. The interval 197 to 206 (YRMFDVGGQR) is G3 motif. Residues 266–273 (ILFLNKID) are G4 motif. The tract at residues 326–331 (TNATDT) is G5 motif.

Belongs to the G-alpha family. G(q) subfamily. In terms of assembly, g proteins are composed of 3 units; alpha, beta and gamma. The alpha chain contains the guanine nucleotide binding site. Mg(2+) serves as cofactor.

Guanine nucleotide-binding proteins (G proteins) are involved as modulators or transducers in various transmembrane signaling systems. The protein is Guanine nucleotide-binding protein alpha-2 subunit (gna-2) of Neurospora crassa (strain ATCC 24698 / 74-OR23-1A / CBS 708.71 / DSM 1257 / FGSC 987).